Reading from the N-terminus, the 366-residue chain is Dehydrogenase aclE (366 aa).

Positions 1–19 (MSKRIRLGIVGLSADPSHC) are cleaved as a signal peptide. N-linked (GlcNAc...) asparagine glycosylation occurs at Asn-330.

It belongs to the Gfo/Idh/MocA family.

It participates in mycotoxin biosynthesis. Dehydrogenase; part of the gene cluster that mediates the biosynthesis of aspirochlorine (or antibiotic A30641), an unusual halogenated spiro compound with distinctive antifungal properties due to selective inhibition of protein biosynthesis, and which is also active against bacteria, viruses, and murine tumor cells. The non-ribosomal peptide synthetase (NRPS) aclP is responsible the formation of the diketopiperazine (DKP) core from the condensation of 2 phenylalanine residues. One Phe residue is tailored into chlorotyrosine by hydroxylation and chlorination, whereas the second Phe undergoes an unprecedented C-C bond cleavage to be converted into glycine. After formation of the DKP, sulfur is incorporated into the DKP by conjugation with glutathione by aclG, followed by its stepwise degradation to the thiol by aclI, aclJ and aclK, and the dithiol oxidation by aclT. In addition, oxygenases (aclB, aclC, aclL and aclO) and O-methyltransferases (aclM and aclU) act as tailoring enzymes to produce the intermediate dechloroaspirochlorine. Ultimately, chlorination of dechloroaspirochlorine by the halogenase aclH is the last step in the aspirochlorine pathway. The chain is Dehydrogenase aclE from Aspergillus oryzae (strain ATCC 42149 / RIB 40) (Yellow koji mold).